We begin with the raw amino-acid sequence, 327 residues long: Probable cell division protein WhiA (327 aa).

The segment at residues 275-308 (SLEELGRLADPVMTKDAVAGRIRRLLSMADRKAK) is a DNA-binding region (H-T-H motif). The interval 307–327 (AKTEGIPDTESAVTPELLEEA) is disordered.

It belongs to the WhiA family.

Functionally, involved in cell division and chromosome segregation. The polypeptide is Probable cell division protein WhiA (Mycobacteroides abscessus (strain ATCC 19977 / DSM 44196 / CCUG 20993 / CIP 104536 / JCM 13569 / NCTC 13031 / TMC 1543 / L948) (Mycobacterium abscessus)).